Here is an 85-residue protein sequence, read N- to C-terminus: RNA-binding protein Hfq (85 aa).

A Sm domain is found at 9 to 68 (DPFLNALRRERVPVSIYLVNGIKLQGQVESFDQFVILLKNTVSQMVYKHAISTVVPARPF).

Belongs to the Hfq family. In terms of assembly, homohexamer.

Functionally, RNA chaperone that binds small regulatory RNA (sRNAs) and mRNAs to facilitate mRNA translational regulation in response to envelope stress, environmental stress and changes in metabolite concentrations. Also binds with high specificity to tRNAs. The sequence is that of RNA-binding protein Hfq from Shewanella frigidimarina (strain NCIMB 400).